We begin with the raw amino-acid sequence, 130 residues long: Small ribosomal subunit protein uS9 (130 aa).

A disordered region spans residues G102–R130. Residues K111 to R130 are compositionally biased toward basic residues.

Belongs to the universal ribosomal protein uS9 family.

The sequence is that of Small ribosomal subunit protein uS9 from Finegoldia magna (strain ATCC 29328 / DSM 20472 / WAL 2508) (Peptostreptococcus magnus).